The sequence spans 547 residues: Calcium-dependent protein kinase 16 (547 aa).

The segment at 1–53 (MGNCCRSPAAAAREDVKTSHFPASTGGGKKKPHQARNGGGGGGGGGGGGWEKK) is disordered. A lipid anchor (N-myristoyl glycine) is attached at G2. The segment covering 37–49 (NGGGGGGGGGGGG) has biased composition (gly residues). A Protein kinase domain is found at 73-331 (YALDRELGRG…AKQVLEHTWL (259 aa)). ATP is bound by residues 79–87 (LGRGEFGVT) and K102. Residue D197 is the Proton acceptor of the active site. The autoinhibitory domain stretch occupies residues 337–367 (APNVPLGDIVKSRLKQFSRMNRFKRRALRVI). EF-hand domains lie at 374 to 409 (EEVE…FGSH), 410 to 445 (LAES…LQRM), 446 to 481 (ANGE…DGAT), and 482 to 517 (DIME…GTDW). Ca(2+) contacts are provided by D387, D389, D391, E398, D423, N425, E434, D459, D461, N463, Y465, E470, D495, D497, D499, K501, and E506.

Belongs to the protein kinase superfamily. Ser/Thr protein kinase family. CDPK subfamily.

Its subcellular location is the membrane. It catalyses the reaction L-seryl-[protein] + ATP = O-phospho-L-seryl-[protein] + ADP + H(+). The enzyme catalyses L-threonyl-[protein] + ATP = O-phospho-L-threonyl-[protein] + ADP + H(+). Activated by calcium. Autophosphorylation may play an important role in the regulation of the kinase activity. In terms of biological role, may play a role in signal transduction pathways that involve calcium as a second messenger. The sequence is that of Calcium-dependent protein kinase 16 from Oryza sativa subsp. japonica (Rice).